We begin with the raw amino-acid sequence, 530 residues long: UDP-glucuronosyltransferase 2B17 (530 aa).

Positions 1 to 23 (MPGKWISALLLLQISCCFQSGNC) are cleaved as a signal peptide. Residues 494–510 (VIGFLLTCSAVIAVLTV) traverse the membrane as a helical segment.

This sequence belongs to the UDP-glycosyltransferase family.

It localises to the endoplasmic reticulum membrane. The enzyme catalyses glucuronate acceptor + UDP-alpha-D-glucuronate = acceptor beta-D-glucuronoside + UDP + H(+). It carries out the reaction 17alpha-estradiol + UDP-alpha-D-glucuronate = 17alpha-estradiol 3-O-(beta-D-glucuronate) + UDP + H(+). The catalysed reaction is 17alpha-estradiol + UDP-alpha-D-glucuronate = 17alpha-estradiol 17-O-(beta-D-glucuronate) + UDP + H(+). It catalyses the reaction 17beta-estradiol + UDP-alpha-D-glucuronate = 17beta-estradiol 17-O-(beta-D-glucuronate) + UDP + H(+). The enzyme catalyses 17beta-hydroxy-5alpha-androstan-3-one + UDP-alpha-D-glucuronate = 5alpha-dihydrotestosterone 17-O-(beta-D-glucuronate) + UDP + H(+). It carries out the reaction testosterone + UDP-alpha-D-glucuronate = testosterone 17-O-(beta-D-glucuronate) + UDP + H(+). In terms of biological role, UDP-glucuronosyltransferase (UGT) that catalyzes phase II biotransformation reactions in which lipophilic substrates are conjugated with glucuronic acid to increase the metabolite's water solubility, thereby facilitating excretion into either the urine or bile. Catalyzes the glucuronidation of endogenous steroid hormones such as androgens (epitestosterone, androsterone) and estrogens (estradiol, epiestradiol). The sequence is that of UDP-glucuronosyltransferase 2B17 from Rattus norvegicus (Rat).